The chain runs to 378 residues: UPF0754 membrane protein BCA_0919 (378 aa).

The next 2 helical transmembrane spans lie at Met-1–Thr-21 and Tyr-357–Leu-377.

The protein belongs to the UPF0754 family.

It localises to the cell membrane. The sequence is that of UPF0754 membrane protein BCA_0919 from Bacillus cereus (strain 03BB102).